The following is a 251-amino-acid chain: Endoglucanase CX (251 aa).

This sequence belongs to the glycosyl hydrolase 9 (cellulase E) family.

It catalyses the reaction Endohydrolysis of (1-&gt;4)-beta-D-glucosidic linkages in cellulose, lichenin and cereal beta-D-glucans.. Its function is as follows. Degrades carboxymethylcellulose (CMC). The polypeptide is Endoglucanase CX (Prunus persica (Peach)).